The primary structure comprises 121 residues: Large ribosomal subunit protein uL14 (121 aa).

The protein belongs to the universal ribosomal protein uL14 family. In terms of assembly, part of the 50S ribosomal subunit. Forms a cluster with proteins L3 and L19. In the 70S ribosome, L14 and L19 interact and together make contacts with the 16S rRNA in bridges B5 and B8.

Functionally, binds to 23S rRNA. Forms part of two intersubunit bridges in the 70S ribosome. This is Large ribosomal subunit protein uL14 from Synechococcus sp. (strain CC9311).